The sequence spans 457 residues: Multidrug resistance protein MdtK (457 aa).

The next 12 membrane-spanning stretches (helical) occupy residues leucine 11–valine 31, isoleucine 53–alanine 73, tryptophan 93–isoleucine 113, alanine 127–leucine 147, glycine 160–tyrosine 180, leucine 188–methionine 208, isoleucine 239–valine 259, alanine 277–isoleucine 297, arginine 316–leucine 336, leucine 357–valine 377, isoleucine 387–alanine 407, and proline 418–leucine 438.

It belongs to the multi antimicrobial extrusion (MATE) (TC 2.A.66.1) family. MdtK subfamily.

Its subcellular location is the cell inner membrane. In terms of biological role, multidrug efflux pump that functions probably as a Na(+)/drug antiporter. The protein is Multidrug resistance protein MdtK of Edwardsiella ictaluri (strain 93-146).